We begin with the raw amino-acid sequence, 258 residues long: Aspartate/glutamate leucyltransferase (258 aa).

Belongs to the R-transferase family. Bpt subfamily.

Its subcellular location is the cytoplasm. The catalysed reaction is N-terminal L-glutamyl-[protein] + L-leucyl-tRNA(Leu) = N-terminal L-leucyl-L-glutamyl-[protein] + tRNA(Leu) + H(+). The enzyme catalyses N-terminal L-aspartyl-[protein] + L-leucyl-tRNA(Leu) = N-terminal L-leucyl-L-aspartyl-[protein] + tRNA(Leu) + H(+). Functions in the N-end rule pathway of protein degradation where it conjugates Leu from its aminoacyl-tRNA to the N-termini of proteins containing an N-terminal aspartate or glutamate. The polypeptide is Aspartate/glutamate leucyltransferase (Bradyrhizobium diazoefficiens (strain JCM 10833 / BCRC 13528 / IAM 13628 / NBRC 14792 / USDA 110)).